The sequence spans 745 residues: Elongation factor G, mitochondrial (745 aa).

The N-terminal 15 residues, 1–15 (MSLITRLLTASSPLR), are a transit peptide targeting the mitochondrion. In terms of domain architecture, tr-type G spans 40-317 (DKIRNIGISA…AVLEYLPNPG (278 aa)). Residues 49-56 (AHIDSGKT), 116-120 (DTPGH), and 170-173 (NKLD) each bind GTP.

This sequence belongs to the TRAFAC class translation factor GTPase superfamily. Classic translation factor GTPase family. EF-G/EF-2 subfamily.

Its subcellular location is the mitochondrion. It functions in the pathway protein biosynthesis; polypeptide chain elongation. Functionally, mitochondrial GTPase that catalyzes the GTP-dependent ribosomal translocation step during translation elongation. During this step, the ribosome changes from the pre-translocational (PRE) to the post-translocational (POST) state as the newly formed A-site-bound peptidyl-tRNA and P-site-bound deacylated tRNA move to the P and E sites, respectively. Catalyzes the coordinated movement of the two tRNA molecules, the mRNA and conformational changes in the ribosome. Essential during development as it acts as a retrograde signal from mitochondria to the nucleus to slow down cell proliferation if mitochondrial energy output is low. In Drosophila ananassae (Fruit fly), this protein is Elongation factor G, mitochondrial (ico).